We begin with the raw amino-acid sequence, 326 residues long: DNA-directed RNA polymerase subunit alpha (326 aa).

The interval 1–231 is alpha N-terminal domain (alpha-NTD); sequence MQTNLLKPKI…DQLVVFAALE (231 aa). Residues 247–326 form an alpha C-terminal domain (alpha-CTD) region; sequence VDPMLMRPVD…ESWPPANLEK (80 aa).

This sequence belongs to the RNA polymerase alpha chain family. Homodimer. The RNAP catalytic core consists of 2 alpha, 1 beta, 1 beta' and 1 omega subunit. When a sigma factor is associated with the core the holoenzyme is formed, which can initiate transcription.

It carries out the reaction RNA(n) + a ribonucleoside 5'-triphosphate = RNA(n+1) + diphosphate. DNA-dependent RNA polymerase catalyzes the transcription of DNA into RNA using the four ribonucleoside triphosphates as substrates. This chain is DNA-directed RNA polymerase subunit alpha, found in Polynucleobacter asymbioticus (strain DSM 18221 / CIP 109841 / QLW-P1DMWA-1) (Polynucleobacter necessarius subsp. asymbioticus).